Reading from the N-terminus, the 89-residue chain is Small ribosomal subunit protein uS15 (89 aa).

This sequence belongs to the universal ribosomal protein uS15 family. As to quaternary structure, part of the 30S ribosomal subunit. Forms a bridge to the 50S subunit in the 70S ribosome, contacting the 23S rRNA.

Functionally, one of the primary rRNA binding proteins, it binds directly to 16S rRNA where it helps nucleate assembly of the platform of the 30S subunit by binding and bridging several RNA helices of the 16S rRNA. In terms of biological role, forms an intersubunit bridge (bridge B4) with the 23S rRNA of the 50S subunit in the ribosome. This is Small ribosomal subunit protein uS15 from Levilactobacillus brevis (strain ATCC 367 / BCRC 12310 / CIP 105137 / JCM 1170 / LMG 11437 / NCIMB 947 / NCTC 947) (Lactobacillus brevis).